Consider the following 485-residue polypeptide: UDP-N-acetylmuramate--L-alanine ligase (485 aa).

120-126 (GSHGKTT) is a binding site for ATP.

Belongs to the MurCDEF family.

It is found in the cytoplasm. The enzyme catalyses UDP-N-acetyl-alpha-D-muramate + L-alanine + ATP = UDP-N-acetyl-alpha-D-muramoyl-L-alanine + ADP + phosphate + H(+). The protein operates within cell wall biogenesis; peptidoglycan biosynthesis. Functionally, cell wall formation. The chain is UDP-N-acetylmuramate--L-alanine ligase from Rickettsia peacockii (strain Rustic).